A 173-amino-acid polypeptide reads, in one-letter code: Dual-action ribosomal maturation protein DarP (173 aa).

Belongs to the DarP family.

Its subcellular location is the cytoplasm. Functionally, member of a network of 50S ribosomal subunit biogenesis factors which assembles along the 30S-50S interface, preventing incorrect 23S rRNA structures from forming. Promotes peptidyl transferase center (PTC) maturation. This is Dual-action ribosomal maturation protein DarP from Pseudomonas syringae pv. tomato (strain ATCC BAA-871 / DC3000).